The sequence spans 1067 residues: Eukaryotic translation initiation factor 3 subunit A (1067 aa).

Residues 92–121 are a coiled coil; sequence LKKFIELAEKKVTEAQAKADEIQSSLESAA. The region spanning 339 to 523 is the PCI domain; it reads MTKAASFVLL…GVLTFDTDIF (185 aa). A coiled-coil region spans residues 608 to 899; it reads RVLIEKKKEA…QKQREEEAEA (292 aa). Composition is skewed to basic and acidic residues over residues 617–632, 642–665, 795–901, and 916–926; these read AATD…EETR, EAEK…DEQD, EVSE…EARR, and AEPERPAERTA. Disordered regions lie at residues 617–665 and 795–1067; these read AATD…DEQD and EVSE…QQQQ. 2 stretches are compositionally biased toward low complexity: residues 965 to 976 and 1025 to 1046; these read AAPAAAPAPAAE and SSSS…AASS.

The protein belongs to the eIF-3 subunit A family. In terms of assembly, component of the eukaryotic translation initiation factor 3 (eIF-3) complex.

It localises to the cytoplasm. RNA-binding component of the eukaryotic translation initiation factor 3 (eIF-3) complex, which is involved in protein synthesis of a specialized repertoire of mRNAs and, together with other initiation factors, stimulates binding of mRNA and methionyl-tRNAi to the 40S ribosome. The eIF-3 complex specifically targets and initiates translation of a subset of mRNAs involved in cell proliferation. The sequence is that of Eukaryotic translation initiation factor 3 subunit A (tif32) from Neosartorya fischeri (strain ATCC 1020 / DSM 3700 / CBS 544.65 / FGSC A1164 / JCM 1740 / NRRL 181 / WB 181) (Aspergillus fischerianus).